A 356-amino-acid polypeptide reads, in one-letter code: Dynein regulatory complex protein 10 (356 aa).

Positions 126–167 form a coiled coil; it reads SNREFFEEVRDREERAVAEQEQLKQKLKLQRVELQKAAGTIQ. The segment at 173–209 is disordered; it reads ARGEVSEVQSSTQQSRAAIEGSARAQSEADKSSFQSD. Positions 178 to 187 are enriched in low complexity; that stretch reads SEVQSSTQQS. A coiled-coil region spans residues 197-287; sequence AQSEADKSSF…LRQLQEYNSG (91 aa). The IQ domain maps to 319–348; it reads QNHAARVIQSYWRGFKKAREAAKKKAKKLE.

The protein belongs to the DRC10 family. In terms of assembly, component of the nexin-dynein regulatory complex (N-DRC).

The protein resides in the cytoplasm. It localises to the cytoskeleton. The protein localises to the flagellum axoneme. Its function is as follows. Component of the nexin-dynein regulatory complex (N-DRC), a key regulator of ciliary/flagellar motility which maintains the alignment and integrity of the distal axoneme and regulates microtubule sliding in motile axonemes. The protein is Dynein regulatory complex protein 10 of Chlamydomonas reinhardtii (Chlamydomonas smithii).